The primary structure comprises 323 residues: MQCSRVLGIEGTAWSLSAAIVGWDKVYAEASHPYVPETGGIHPMAAAQHHASHVSQIVRQVLDSGYDFDGVAFSRGPGLGPCLRTVATAARALALAYDVPLMGVNHCVAHIEVGRWQTGCHDPVVLYVSGANSQVIAFRRGRYRVFGETLDIGIGNALDKFGRHLGLQHPGGPKIEALAREGKNYIHLPYVVKGMDLSYSGMMSAAKEAAAKYLKEDVCFSLQENAFAMLVEVTERALAHTGKNEVLIGGGVGANMRLQSMLDTMCRDRGAKFYAPPRKFFGDNGSMIAYTGLLQLKYDQTIPVEDSAVNPIYRTDEVEIPWL.

Fe cation contacts are provided by His-106, His-110, and Tyr-127. Residues 127 to 131, Asp-159, Gly-172, Glu-176, and Asn-255 each bind substrate; that span reads YVSGA. Asp-283 serves as a coordination point for Fe cation.

Belongs to the KAE1 / TsaD family. As to quaternary structure, monomer. Component of the KEOPS complex that consists of Kae1, Bud32, Cgi121 and Pcc1; the whole complex dimerizes. Requires Fe(2+) as cofactor.

It is found in the cytoplasm. The enzyme catalyses L-threonylcarbamoyladenylate + adenosine(37) in tRNA = N(6)-L-threonylcarbamoyladenosine(37) in tRNA + AMP + H(+). Required for the formation of a threonylcarbamoyl group on adenosine at position 37 (t(6)A37) in tRNAs that read codons beginning with adenine. Is a component of the KEOPS complex that is probably involved in the transfer of the threonylcarbamoyl moiety of threonylcarbamoyl-AMP (TC-AMP) to the N6 group of A37. Kae1 likely plays a direct catalytic role in this reaction, but requires other protein(s) of the complex to fulfill this activity. The protein is tRNA N6-adenosine threonylcarbamoyltransferase of Methanocella arvoryzae (strain DSM 22066 / NBRC 105507 / MRE50).